The chain runs to 554 residues: Myo-inositol transporter 1 (554 aa).

The span at 1-13 shows a compositional bias: polar residues; that stretch reads MGSSTNNTQSKAT. The disordered stretch occupies residues 1–57; the sequence is MGSSTNNTQSKATPSVLENEVNSSKSSVVSSTSSAKGLLRETTNHGTMETSSVQISE. N-linked (GlcNAc...) asparagine glycosylation is found at Asn-6 and Asn-22. Residues 15-34 are compositionally biased toward low complexity; sequence SVLENEVNSSKSSVVSSTSS. Positions 44 to 57 are enriched in polar residues; it reads NHGTMETSSVQISE. 6 consecutive transmembrane segments (helical) span residues 65–85, 110–130, 144–164, 167–187, 196–216, and 227–247; these read MVLV…YDTG, FITS…GVLA, IIFV…TMIA, FVLG…ISEL, LIVT…FINW, and VSVG…WFLP. Asn-279 carries N-linked (GlcNAc...) asparagine glycosylation. A helical membrane pass occupies residues 313–332; that stretch reads GNFRALILACGLQGIQQFTG. N-linked (GlcNAc...) asparagine glycosylation occurs at Asn-351. 5 helical membrane passes run 354–374, 382–402, 420–440, 459–479, and 490–510; these read AVSI…ICII, ILLV…VAFH, GWGI…AIGI, IGAM…ASTF, and GTFS…YFLL.

Belongs to the major facilitator superfamily. Sugar transporter (TC 2.A.1.1) family.

Its subcellular location is the cell membrane. It catalyses the reaction myo-inositol(out) + H(+)(out) = myo-inositol(in) + H(+)(in). Functionally, major transporter for myo-inositol. The chain is Myo-inositol transporter 1 from Candida albicans (strain SC5314 / ATCC MYA-2876) (Yeast).